A 222-amino-acid polypeptide reads, in one-letter code: Endonuclease V (222 aa).

Residues Asp34 and Asp102 each contribute to the Mg(2+) site.

This sequence belongs to the endonuclease V family. The cofactor is Mg(2+).

It localises to the cytoplasm. It carries out the reaction Endonucleolytic cleavage at apurinic or apyrimidinic sites to products with a 5'-phosphate.. DNA repair enzyme involved in the repair of deaminated bases. Selectively cleaves double-stranded DNA at the second phosphodiester bond 3' to a deoxyinosine leaving behind the intact lesion on the nicked DNA. This Proteus mirabilis (strain HI4320) protein is Endonuclease V.